The sequence spans 166 residues: Large ribosomal subunit protein uL10 (166 aa).

Belongs to the universal ribosomal protein uL10 family. In terms of assembly, part of the ribosomal stalk of the 50S ribosomal subunit. The N-terminus interacts with L11 and the large rRNA to form the base of the stalk. The C-terminus forms an elongated spine to which L12 dimers bind in a sequential fashion forming a multimeric L10(L12)X complex.

Its function is as follows. Forms part of the ribosomal stalk, playing a central role in the interaction of the ribosome with GTP-bound translation factors. This Bacillus cereus (strain 03BB102) protein is Large ribosomal subunit protein uL10.